The primary structure comprises 482 residues: Cardiolipin synthase (482 aa).

The next 2 membrane-spanning stretches (helical) occupy residues 4 to 24 (LAYL…VTVF) and 34 to 54 (WAWL…YLIF). 2 PLD phosphodiesterase domains span residues 217-244 (LNYR…GDEY) and 395-422 (DNGF…DFRS). Residues histidine 222, lysine 224, aspartate 229, histidine 400, lysine 402, and aspartate 407 contribute to the active site.

Belongs to the phospholipase D family. Cardiolipin synthase subfamily.

The protein localises to the cell membrane. The catalysed reaction is 2 a 1,2-diacyl-sn-glycero-3-phospho-(1'-sn-glycerol) = a cardiolipin + glycerol. Functionally, catalyzes the reversible phosphatidyl group transfer from one phosphatidylglycerol molecule to another to form cardiolipin (CL) (diphosphatidylglycerol) and glycerol. The chain is Cardiolipin synthase (cls) from Listeria innocua serovar 6a (strain ATCC BAA-680 / CLIP 11262).